Consider the following 360-residue polypeptide: DNA integrity scanning protein DisA (360 aa).

Residues Asp-9–Thr-147 form the DAC domain. Residues Gly-76, Leu-94, and Thr-107–Thr-111 contribute to the ATP site.

The protein belongs to the DisA family. As to quaternary structure, homooctamer. The cofactor is Mg(2+).

The enzyme catalyses 2 ATP = 3',3'-c-di-AMP + 2 diphosphate. Its function is as follows. Participates in a DNA-damage check-point that is active prior to asymmetric division when DNA is damaged. DisA forms globular foci that rapidly scan along the chromosomes during sporulation, searching for lesions. When a lesion is present, DisA pauses at the lesion site. This triggers a cellular response that culminates in a temporary block in sporulation initiation. Functionally, also has diadenylate cyclase activity, catalyzing the condensation of 2 ATP molecules into cyclic di-AMP (c-di-AMP). c-di-AMP acts as a signaling molecule that couples DNA integrity with progression of sporulation. The rise in c-di-AMP level generated by DisA while scanning the chromosome, operates as a positive signal that advances sporulation; upon encountering a lesion, the DisA focus arrests at the damaged site and halts c-di-AMP synthesis. This Acetivibrio thermocellus (strain ATCC 27405 / DSM 1237 / JCM 9322 / NBRC 103400 / NCIMB 10682 / NRRL B-4536 / VPI 7372) (Clostridium thermocellum) protein is DNA integrity scanning protein DisA.